A 1427-amino-acid polypeptide reads, in one-letter code: DNA-directed RNA polymerase subunit beta' (1427 aa).

Cysteine 70, cysteine 72, cysteine 85, and cysteine 88 together coordinate Zn(2+). Residues aspartate 461, aspartate 463, and aspartate 465 each contribute to the Mg(2+) site. 4 residues coordinate Zn(2+): cysteine 809, cysteine 882, cysteine 889, and cysteine 892. Residues 1394-1427 (EAAIGDDPLGKVQGEDFTTDDVMVEERPEGASEE) are disordered. Over residues 1417–1427 (VEERPEGASEE) the composition is skewed to basic and acidic residues.

Belongs to the RNA polymerase beta' chain family. In terms of assembly, the RNAP catalytic core consists of 2 alpha, 1 beta, 1 beta' and 1 omega subunit. When a sigma factor is associated with the core the holoenzyme is formed, which can initiate transcription. Mg(2+) serves as cofactor. The cofactor is Zn(2+).

The catalysed reaction is RNA(n) + a ribonucleoside 5'-triphosphate = RNA(n+1) + diphosphate. In terms of biological role, DNA-dependent RNA polymerase catalyzes the transcription of DNA into RNA using the four ribonucleoside triphosphates as substrates. This is DNA-directed RNA polymerase subunit beta' from Sphingopyxis alaskensis (strain DSM 13593 / LMG 18877 / RB2256) (Sphingomonas alaskensis).